The primary structure comprises 79 residues: Transcriptional regulator SplA (79 aa).

Regulator of the spore photoproduct lyase operon (splAB). This Bacillus subtilis (strain 168) protein is Transcriptional regulator SplA (splA).